Consider the following 588-residue polypeptide: Transport ATP-binding protein AarD (588 aa).

The 293-residue stretch at 24–316 (LRISMLLGVV…LGTYYHAKAQ (293 aa)) folds into the ABC transmembrane type-1 domain. The next 6 membrane-spanning stretches (helical) occupy residues 29–49 (LLGV…AVIL), 62–82 (LLTP…LTVI), 149–169 (IIPI…ALIL), 170–190 (FATA…AADA), 250–270 (SGVL…YFGF), and 276–296 (LNFG…ALIL). One can recognise an ABC transporter domain in the interval 350–583 (IEANKLEIYS…EGPFARLLAH (234 aa)). 383 to 390 (GQSGAGKS) is a binding site for ATP.

This sequence belongs to the ABC transporter superfamily.

It is found in the cell inner membrane. Somehow involved in the cytochrome D branch of aerobic respiration. Seems to be a component of a transport system. This is Transport ATP-binding protein AarD (aarD) from Providencia stuartii.